A 96-amino-acid polypeptide reads, in one-letter code: Large ribosomal subunit protein eL21 (96 aa).

A disordered region spans residues 1–66; that stretch reads MPSSNGPLEG…FDGQTGTVEG (66 aa).

This sequence belongs to the eukaryotic ribosomal protein eL21 family. As to quaternary structure, part of the 50S ribosomal subunit. Interacts with protein L18 and binds the 5S rRNA. Has been cross-linked to L18.

In terms of biological role, this is one of 5 proteins that mediate the attachment of the 5S rRNA onto the large ribosomal subunit, stabilizing the orientation of adjacent RNA domains. This is Large ribosomal subunit protein eL21 (rpl21e) from Haloarcula marismortui (strain ATCC 43049 / DSM 3752 / JCM 8966 / VKM B-1809) (Halobacterium marismortui).